Here is a 330-residue protein sequence, read N- to C-terminus: Anthranilate phosphoribosyltransferase (330 aa).

Residues glycine 79, glycine 82 to aspartate 83, threonine 87, asparagine 89 to threonine 92, lysine 107 to serine 115, and serine 119 contribute to the 5-phospho-alpha-D-ribose 1-diphosphate site. Anthranilate is bound at residue glycine 79. Serine 91 provides a ligand contact to Mg(2+). Residue asparagine 110 coordinates anthranilate. Arginine 165 contributes to the anthranilate binding site. Residues aspartate 223 and glutamate 224 each contribute to the Mg(2+) site.

The protein belongs to the anthranilate phosphoribosyltransferase family. Homodimer. It depends on Mg(2+) as a cofactor.

The catalysed reaction is N-(5-phospho-beta-D-ribosyl)anthranilate + diphosphate = 5-phospho-alpha-D-ribose 1-diphosphate + anthranilate. Its pathway is amino-acid biosynthesis; L-tryptophan biosynthesis; L-tryptophan from chorismate: step 2/5. Catalyzes the transfer of the phosphoribosyl group of 5-phosphorylribose-1-pyrophosphate (PRPP) to anthranilate to yield N-(5'-phosphoribosyl)-anthranilate (PRA). The chain is Anthranilate phosphoribosyltransferase from Flavobacterium johnsoniae (strain ATCC 17061 / DSM 2064 / JCM 8514 / BCRC 14874 / CCUG 350202 / NBRC 14942 / NCIMB 11054 / UW101) (Cytophaga johnsonae).